Reading from the N-terminus, the 277-residue chain is Diaminopimelate epimerase (277 aa).

N13, Q46, and N66 together coordinate substrate. The Proton donor role is filled by C75. Residues 76 to 77 (GN), N160, N193, and 211 to 212 (ER) each bind substrate. The active-site Proton acceptor is the C220. A substrate-binding site is contributed by 221–222 (GS).

This sequence belongs to the diaminopimelate epimerase family. In terms of assembly, homodimer.

It is found in the cytoplasm. The enzyme catalyses (2S,6S)-2,6-diaminopimelate = meso-2,6-diaminopimelate. It participates in amino-acid biosynthesis; L-lysine biosynthesis via DAP pathway; DL-2,6-diaminopimelate from LL-2,6-diaminopimelate: step 1/1. Catalyzes the stereoinversion of LL-2,6-diaminopimelate (L,L-DAP) to meso-diaminopimelate (meso-DAP), a precursor of L-lysine and an essential component of the bacterial peptidoglycan. The sequence is that of Diaminopimelate epimerase from Legionella pneumophila (strain Paris).